We begin with the raw amino-acid sequence, 139 residues long: Transthyretin-like protein 5 (139 aa).

The signal sequence occupies residues 1-15 (MKLIILLCLVASSYA).

It belongs to the nematode transthyretin-like family.

The protein localises to the secreted. The polypeptide is Transthyretin-like protein 5 (ttr-5) (Caenorhabditis elegans).